The following is a 571-amino-acid chain: Glutamine--tRNA ligase (571 aa).

A 'HIGH' region motif is present at residues 35–45; the sequence is PEPNGYLHIGH. ATP-binding positions include 36–38 and 42–48; these read EPN and HIGHAKS. Residues Asp-68 and Tyr-213 each contribute to the L-glutamine site. ATP-binding positions include Thr-232, 262–263, and 270–272; these read RL and LSK. The 'KMSKS' region signature appears at 269–273; it reads ILSKR.

Belongs to the class-I aminoacyl-tRNA synthetase family. As to quaternary structure, monomer.

Its subcellular location is the cytoplasm. The catalysed reaction is tRNA(Gln) + L-glutamine + ATP = L-glutaminyl-tRNA(Gln) + AMP + diphosphate. This chain is Glutamine--tRNA ligase, found in Buchnera aphidicola subsp. Acyrthosiphon pisum (strain APS) (Acyrthosiphon pisum symbiotic bacterium).